A 197-amino-acid chain; its full sequence is Holliday junction branch migration complex subunit RuvA (197 aa).

The domain I stretch occupies residues 1-64; that stretch reads MIGRLRGIVA…EDSVSLYGFL (64 aa). Positions 65–143 are domain II; it reads REGERRLFRD…QFGAGGALPT (79 aa). Positions 144-153 are flexible linker; the sequence is GSGPAPADPL. The tract at residues 153-197 is domain III; the sequence is LSDATVALQQLGYKPAEAARMAREAFNEGDEVAIVIRKALQSALR.

This sequence belongs to the RuvA family. As to quaternary structure, homotetramer. Forms an RuvA(8)-RuvB(12)-Holliday junction (HJ) complex. HJ DNA is sandwiched between 2 RuvA tetramers; dsDNA enters through RuvA and exits via RuvB. An RuvB hexamer assembles on each DNA strand where it exits the tetramer. Each RuvB hexamer is contacted by two RuvA subunits (via domain III) on 2 adjacent RuvB subunits; this complex drives branch migration. In the full resolvosome a probable DNA-RuvA(4)-RuvB(12)-RuvC(2) complex forms which resolves the HJ.

It localises to the cytoplasm. The RuvA-RuvB-RuvC complex processes Holliday junction (HJ) DNA during genetic recombination and DNA repair, while the RuvA-RuvB complex plays an important role in the rescue of blocked DNA replication forks via replication fork reversal (RFR). RuvA specifically binds to HJ cruciform DNA, conferring on it an open structure. The RuvB hexamer acts as an ATP-dependent pump, pulling dsDNA into and through the RuvAB complex. HJ branch migration allows RuvC to scan DNA until it finds its consensus sequence, where it cleaves and resolves the cruciform DNA. The protein is Holliday junction branch migration complex subunit RuvA of Stenotrophomonas maltophilia (strain R551-3).